The sequence spans 363 residues: Mitogen-activated protein kinase 13 (363 aa).

In terms of domain architecture, Protein kinase spans isoleucine 33–leucine 319. ATP contacts are provided by residues isoleucine 39–valine 47 and lysine 62. The active-site Proton acceptor is the aspartate 159. Threonine 191 is modified (phosphothreonine). A TXY motif is present at residues threonine 191 to tyrosine 193. Tyrosine 193 carries the post-translational modification Phosphotyrosine. Phosphothreonine is present on threonine 196.

It belongs to the protein kinase superfamily. CMGC Ser/Thr protein kinase family. MAP kinase subfamily. Interacts with MKK6. Dually phosphorylated on Thr-191 and Tyr-193, which activates the enzyme. Expressed in roots, stems and flower buds.

It catalyses the reaction L-seryl-[protein] + ATP = O-phospho-L-seryl-[protein] + ADP + H(+). The catalysed reaction is L-threonyl-[protein] + ATP = O-phospho-L-threonyl-[protein] + ADP + H(+). With respect to regulation, activated by threonine and tyrosine phosphorylation. Activated by the MAP kinase kinase MKK6 in vitro. In terms of biological role, MKK6-MPK13 module positively regulates lateral root formation. The sequence is that of Mitogen-activated protein kinase 13 (MPK13) from Arabidopsis thaliana (Mouse-ear cress).